The primary structure comprises 729 residues: Solute carrier family 15 member 2 (729 aa).

Residues 1-34 (MNPFQKNESKETLFSPVSTEEMLPGPPSPPKKST) form a disordered region. The Cytoplasmic segment spans residues 1 to 57 (MNPFQKNESKETLFSPVSTEEMLPGPPSPPKKSTPKLFGSSYPLSIAFIVVNEFCER). A Phosphoserine modification is found at Ser9. A Phosphothreonine modification is found at Thr12. Ser28 is subject to Phosphoserine. Residues 58–78 (FSYYGMKAVLTLYFLYFLHWN) form a helical membrane-spanning segment. Residues 79–87 (EDTSTSVYH) are Extracellular-facing. A helical transmembrane segment spans residues 88-108 (AFSSLCYFTPILGAAIADSWL). Residues 109–113 (GKFKT) are Cytoplasmic-facing. A helical transmembrane segment spans residues 114–134 (IIYLSLVYVLGHVFKSLGAIP). The Extracellular portion of the chain corresponds to 135 to 139 (ILGGK). A helical transmembrane segment spans residues 140–160 (MLHTILSLVGLSLIALGTGGI). Topologically, residues 161–183 (KPCVAAFGGDQFEEEHAEARTRY) are cytoplasmic. The helical transmembrane segment at 184 to 204 (FSVFYLSINAGSLISTFITPM) threads the bilayer. The Extracellular portion of the chain corresponds to 205–217 (LRGDVKCFGEDCY). The helical transmembrane segment at 218–238 (ALAFGIPGLLMVLALVVFAMG) threads the bilayer. The Cytoplasmic segment spans residues 239–295 (SKMYRKPPPEGNIVAQVTKCIWFAICNRFRNRSEDIPKRQHWLDWAAEKYPKHLIMD). A helical membrane pass occupies residues 296–316 (VKALTRILFLYIPLPMFWALL). Topologically, residues 317–343 (DQQGSRWTLQANKMDGDLGFFVLQPDQ) are extracellular. A helical membrane pass occupies residues 344 to 364 (MQVLNPFLVLVFIPLFDLVIY). Over 365 to 380 (RLISKCGVNFSSLRKM) the chain is Cytoplasmic. The chain crosses the membrane as a helical span at residues 381–401 (AVGMILACLAFAVAALVEIKI). Residues 402–611 (NGMIHPQPAS…PANKLSIAWQ (210 aa)) lie on the Extracellular side of the membrane. An extracellular domain (ECD) region spans residues 402 to 611 (NGMIHPQPAS…PANKLSIAWQ (210 aa)). Residues Asn448, Asn472, Asn528, and Asn587 are each glycosylated (N-linked (GlcNAc...) asparagine). A helical transmembrane segment spans residues 612–632 (LPQYVLVTAAEVMFSVTGLEF). Over 633–643 (SYSQAPSSMKS) the chain is Cytoplasmic. A helical membrane pass occupies residues 644–664 (VLQAAWLLTVAVGNIIVLIVA). Residues 665-674 (QFSGLVQWAE) lie on the Extracellular side of the membrane. The chain crosses the membrane as a helical span at residues 675 to 695 (FVLFSCLLLVVCLIFSVMGYY). At 696 to 729 (YVPLKSEGIHEATEKQIPHIQGNMINLETKNTRL) the chain is on the cytoplasmic side.

This sequence belongs to the major facilitator superfamily. Proton-dependent oligopeptide transporter (POT/PTR) (TC 2.A.17) family. In terms of assembly, interacts (via extracellular domain region) with trypsin. As to expression, expressed in kidney brush border cells (at protein level). Highly expressed in macrophages.

Its subcellular location is the apical cell membrane. It localises to the cytoplasmic vesicle. It is found in the phagosome membrane. The protein resides in the cell membrane. The enzyme catalyses N-acetyl-D-muramoyl-L-alanyl-D-isoglutamine(out) + 3 H(+)(out) = N-acetyl-D-muramoyl-L-alanyl-D-isoglutamine(in) + 3 H(+)(in). It catalyses the reaction a dipeptide(out) + 2 H(+)(out) = a dipeptide(in) + 2 H(+)(in). The catalysed reaction is glycyl-L-leucine(out) + 2 H(+)(out) = glycyl-L-leucine(in) + 2 H(+)(in). It carries out the reaction glycyl-L-lysine(out) + 2 H(+)(out) = glycyl-L-lysine(in) + 2 H(+)(in). The enzyme catalyses glycyl-L-glutamate(out) + 3 H(+)(out) = glycyl-L-glutamate(in) + 3 H(+)(in). It catalyses the reaction L-alanyl-L-alanine(out) + 2 H(+)(out) = L-alanyl-L-alanine(in) + 2 H(+)(in). The catalysed reaction is an L-amino acid tripeptide(out) + 2 H(+)(out) = an L-amino acid tripeptide(in) + 2 H(+)(in). It carries out the reaction carnosine(out) + 2 H(+)(out) = carnosine(in) + 2 H(+)(in). In terms of biological role, proton-coupled amino-acid transporter that transports oligopeptides of 2 to 4 amino acids with a preference for dipeptides. Transports neutral and anionic dipeptides with a proton to peptide stoichiometry of 2:1 or 3:1. In kidney, involved in the absorption of circulating di- and tripeptides from the glomerular filtrate. Can also transport beta-lactam antibiotics, such as the aminocephalosporin cefadroxil, and other antiviral and anticancer drugs. Transports the dipeptide-like aminopeptidase inhibitor bestatin. Also able to transport carnosine. Involved in innate immunity by promoting the detection of microbial pathogens by NOD-like receptors (NLRs). Mediates transport of bacterial peptidoglycans across the plasma membrane or, in macrophages, the phagosome membrane: catalyzes the transport of certain bacterial peptidoglycans, such as muramyl dipeptide (MDP), the NOD2 ligand. The polypeptide is Solute carrier family 15 member 2 (Mus musculus (Mouse)).